Here is a 253-residue protein sequence, read N- to C-terminus: 3-deoxy-manno-octulosonate cytidylyltransferase (253 aa).

Belongs to the KdsB family.

It is found in the cytoplasm. The enzyme catalyses 3-deoxy-alpha-D-manno-oct-2-ulosonate + CTP = CMP-3-deoxy-beta-D-manno-octulosonate + diphosphate. It participates in nucleotide-sugar biosynthesis; CMP-3-deoxy-D-manno-octulosonate biosynthesis; CMP-3-deoxy-D-manno-octulosonate from 3-deoxy-D-manno-octulosonate and CTP: step 1/1. The protein operates within bacterial outer membrane biogenesis; lipopolysaccharide biosynthesis. In terms of biological role, activates KDO (a required 8-carbon sugar) for incorporation into bacterial lipopolysaccharide in Gram-negative bacteria. The chain is 3-deoxy-manno-octulosonate cytidylyltransferase from Acidithiobacillus ferrooxidans (strain ATCC 23270 / DSM 14882 / CIP 104768 / NCIMB 8455) (Ferrobacillus ferrooxidans (strain ATCC 23270)).